A 168-amino-acid chain; its full sequence is Large ribosomal subunit protein uL10 (168 aa).

This sequence belongs to the universal ribosomal protein uL10 family. Part of the ribosomal stalk of the 50S ribosomal subunit. The N-terminus interacts with L11 and the large rRNA to form the base of the stalk. The C-terminus forms an elongated spine to which L12 dimers bind in a sequential fashion forming a multimeric L10(L12)X complex.

Its function is as follows. Forms part of the ribosomal stalk, playing a central role in the interaction of the ribosome with GTP-bound translation factors. The chain is Large ribosomal subunit protein uL10 from Levilactobacillus brevis (strain ATCC 367 / BCRC 12310 / CIP 105137 / JCM 1170 / LMG 11437 / NCIMB 947 / NCTC 947) (Lactobacillus brevis).